The chain runs to 91 residues: Probable translocation protein y4yM (91 aa).

The next 2 membrane-spanning stretches (helical) occupy residues 15–35 (VVFM…GLTI) and 55–75 (LLVV…PLIE).

This sequence belongs to the FliQ/MopD/SpaQ family.

It localises to the cell membrane. Its function is as follows. Could be involved in the secretion of an unknown factor. The sequence is that of Probable translocation protein y4yM from Sinorhizobium fredii (strain NBRC 101917 / NGR234).